Reading from the N-terminus, the 439-residue chain is Paraneoplastic antigen-like protein 8A (439 aa).

Residues 213–439 (ETPNNWNATE…RRATNESRKV (227 aa)) are disordered. Basic residues predominate over residues 231–249 (LVRRAGAKSRSRRKKQKKN). Over residues 403–419 (KAPQGQQPAEATASTSR) the composition is skewed to polar residues. The segment covering 423 to 439 (AKPEGSPRRATNESRKV) has biased composition (basic and acidic residues).

It belongs to the PNMA family.

The sequence is that of Paraneoplastic antigen-like protein 8A (PNMA8A) from Pongo abelii (Sumatran orangutan).